A 154-amino-acid chain; its full sequence is Probable prefoldin subunit 5 (154 aa).

The protein belongs to the prefoldin subunit alpha family. In terms of assembly, heterohexamer of two PFD-alpha type and four PFD-beta type subunits. Interacts with byr1.

The protein localises to the cytoplasm. Binds specifically to cytosolic chaperonin (c-CPN) and transfers target proteins to it. Binds to nascent polypeptide chain and promotes folding in an environment in which there are many competing pathways for nonnative proteins. Required for normal cytoskeletal function and when bound to byr1, is involved in the regulation of sexual differentiation. The chain is Probable prefoldin subunit 5 (bob1) from Schizosaccharomyces pombe (strain 972 / ATCC 24843) (Fission yeast).